We begin with the raw amino-acid sequence, 112 residues long: Transmembrane protein 14 homolog (112 aa).

A helical transmembrane segment spans residues 3 to 23 (VDWFGYVYAATVAAGGIMGYA).

It belongs to the TMEM14 family.

It is found in the membrane. This is Transmembrane protein 14 homolog from Drosophila melanogaster (Fruit fly).